A 387-amino-acid chain; its full sequence is Pepsin II-1 (387 aa).

An N-terminal signal peptide occupies residues 1–15; the sequence is MKWLLLLGLLALSEC. Residues 16-59 constitute a propeptide, activation peptide; that stretch reads IVHKVPLVRKKSLRKNLIEKGLLQDYLKTHTPNLATKYFPKETF. Residues 75-384 enclose the Peptidase A1 domain; sequence YFGTISIGTP…DRANNQVGLA (310 aa). Asp-93 is a catalytic residue. Cysteines 106 and 111 form a disulfide. Ser-129 is modified (phosphoserine). A disulfide bond links Cys-267 and Cys-271. The active site involves Asp-276. Cys-310 and Cys-343 are oxidised to a cystine.

Belongs to the peptidase A1 family.

It is found in the secreted. It carries out the reaction Preferential cleavage: hydrophobic, preferably aromatic, residues in P1 and P1' positions. Cleaves 1-Phe-|-Val-2, 4-Gln-|-His-5, 13-Glu-|-Ala-14, 14-Ala-|-Leu-15, 15-Leu-|-Tyr-16, 16-Tyr-|-Leu-17, 23-Gly-|-Phe-24, 24-Phe-|-Phe-25 and 25-Phe-|-Tyr-26 bonds in the B chain of insulin.. In terms of biological role, shows particularly broad specificity; although bonds involving phenylalanine and leucine are preferred, many others are also cleaved to some extent. The sequence is that of Pepsin II-1 from Oryctolagus cuniculus (Rabbit).